The following is a 210-amino-acid chain: CASP-like protein 3A2 (210 aa).

Residues 1–45 (MMMNGQKMAAAEVAVQLPESKMVTENIGGAAAAMRPFGRKAEVMN) are Cytoplasmic-facing. The helical transmembrane segment at 46 to 66 (VLLRVLCMVTSVAALSSMVTA) threads the bilayer. Topologically, residues 67-92 (QQSSTVSIYGFMLPIQSKWSFSHSFE) are extracellular. A helical membrane pass occupies residues 93-113 (YVVGVSAVVAAHSLLQLLISV). Residues 114–128 (SRLLRKSPVIQSRSH) are Cytoplasmic-facing. The chain crosses the membrane as a helical span at residues 129–149 (AWLVFAGDQVFAYAMISAGAA). The Extracellular portion of the chain corresponds to 150–178 (ASGVTNLNRTGIRHTALPNFCKPLQSFCD). An N-linked (GlcNAc...) asparagine glycan is attached at Asn-157. Residues 179 to 199 (HVAVSIFFTFLSCFLLAASAV) traverse the membrane as a helical segment. Over 200-210 (QEVIWLSRSKY) the chain is Cytoplasmic.

The protein belongs to the Casparian strip membrane proteins (CASP) family. As to quaternary structure, homodimer and heterodimers.

The protein resides in the cell membrane. This chain is CASP-like protein 3A2, found in Populus trichocarpa (Western balsam poplar).